The chain runs to 409 residues: Transforming growth factor beta regulator 1 (409 aa).

Polar residues predominate over residues 1–13; it reads MNHSPATTFSPHS. 2 disordered regions span residues 1 to 31 and 127 to 162; these read MNHSPATTFSPHSRYQELKVRNKKSTKKSHK and GGSCKKVKKDKREKGKENKSEAMKKPSKKKRVTEGT. The segment covering 21 to 31 has biased composition (basic residues); that stretch reads RNKKSTKKSHK. Positions 136–150 are enriched in basic and acidic residues; it reads DKREKGKENKSEAMK. The FYR N-terminal domain occupies 179–238; that stretch reads VFPIVLEGLTVYSLGEIISDRAGFHEKVAIYPVGFCSTRVYVGMKNPDQKCLYTCQIKDG. The FYR C-terminal domain occupies 239–318; it reads GTGPQFEIVP…RKCTGYQWVK (80 aa).

It belongs to the TBRG1 family.

It localises to the nucleus. In terms of biological role, may act as a growth inhibitor. May be involved in maintaining chromosomal stability. The sequence is that of Transforming growth factor beta regulator 1 (tbrg1) from Xenopus tropicalis (Western clawed frog).